Reading from the N-terminus, the 217-residue chain is Dephospho-CoA kinase (217 aa).

The DPCK domain maps to 4–203 (IVALTGGISS…SHLSRIYNKN (200 aa)). 12-17 (SSGKTT) contacts ATP.

Belongs to the CoaE family.

It is found in the cytoplasm. The catalysed reaction is 3'-dephospho-CoA + ATP = ADP + CoA + H(+). Its pathway is cofactor biosynthesis; coenzyme A biosynthesis; CoA from (R)-pantothenate: step 5/5. Its function is as follows. Catalyzes the phosphorylation of the 3'-hydroxyl group of dephosphocoenzyme A to form coenzyme A. This Buchnera aphidicola subsp. Acyrthosiphon pisum (strain APS) (Acyrthosiphon pisum symbiotic bacterium) protein is Dephospho-CoA kinase.